A 1944-amino-acid chain; its full sequence is Anaphase-promoting complex subunit 1 (1944 aa).

Phosphoserine occurs at positions 51, 60, 202, and 286. Phosphothreonine is present on threonine 291. Residues 305-343 (LRSLSKGDSPVTSPFQNYSSIHSQSRSTSSPSLHSRSPS) are disordered. A phosphoserine mark is found at serine 313, serine 341, serine 343, serine 355, serine 362, serine 373, and serine 377. The segment covering 323–343 (SSIHSQSRSTSSPSLHSRSPS) has biased composition (low complexity). The tract at residues 373–396 (SHNQSPKRHSISHSPNSNSNGSFL) is disordered. The span at 384–394 (SHSPNSNSNGS) shows a compositional bias: low complexity. Threonine 537 bears the Phosphothreonine mark. Serine 547 and serine 555 each carry phosphoserine. Phosphotyrosine is present on tyrosine 571. 3 positions are modified to phosphoserine: serine 686, serine 688, and serine 916. The segment at 994 to 1016 (KGKSVLSSDVPSGTETEEEDDGM) is disordered. The segment covering 998 to 1007 (VLSSDVPSGT) has biased composition (polar residues). 4 PC repeats span residues 1297–1325 (AAGL…PEQL), 1366–1404 (GATL…PEFL), 1467–1501 (GACL…YLSA), and 1520–1552 (LLSL…EMNY).

This sequence belongs to the APC1 family. In terms of assembly, the mammalian APC/C is composed at least of 14 distinct subunits ANAPC1, ANAPC2, CDC27/APC3, ANAPC4, ANAPC5, CDC16/APC6, ANAPC7, CDC23/APC8, ANAPC10, ANAPC11, CDC26/APC12, ANAPC13, ANAPC15 and ANAPC16 that assemble into a complex of at least 19 chains with a combined molecular mass of around 1.2 MDa; APC/C interacts with FZR1 and FBXO5. In terms of processing, phosphorylated. Phosphorylation on Ser-355 occurs specifically during mitosis.

It functions in the pathway protein modification; protein ubiquitination. Component of the anaphase promoting complex/cyclosome (APC/C), a cell cycle-regulated E3 ubiquitin ligase that controls progression through mitosis and the G1 phase of the cell cycle. The APC/C complex acts by mediating ubiquitination and subsequent degradation of target proteins: it mainly mediates the formation of 'Lys-11'-linked polyubiquitin chains and, to a lower extent, the formation of 'Lys-48'- and 'Lys-63'-linked polyubiquitin chains. The APC/C complex catalyzes assembly of branched 'Lys-11'-/'Lys-48'-linked branched ubiquitin chains on target proteins. The sequence is that of Anaphase-promoting complex subunit 1 (ANAPC1) from Homo sapiens (Human).